Reading from the N-terminus, the 229-residue chain is Uracil-DNA glycosylase (229 aa).

The Proton acceptor role is filled by Asp-64.

This sequence belongs to the uracil-DNA glycosylase (UDG) superfamily. UNG family.

It is found in the cytoplasm. It catalyses the reaction Hydrolyzes single-stranded DNA or mismatched double-stranded DNA and polynucleotides, releasing free uracil.. In terms of biological role, excises uracil residues from the DNA which can arise as a result of misincorporation of dUMP residues by DNA polymerase or due to deamination of cytosine. This chain is Uracil-DNA glycosylase, found in Klebsiella pneumoniae subsp. pneumoniae (strain ATCC 700721 / MGH 78578).